Consider the following 199-residue polypeptide: Probable chemoreceptor glutamine deamidase CheD (199 aa).

The protein belongs to the CheD family.

It catalyses the reaction L-glutaminyl-[protein] + H2O = L-glutamyl-[protein] + NH4(+). Probably deamidates glutamine residues to glutamate on methyl-accepting chemotaxis receptors (MCPs), playing an important role in chemotaxis. The polypeptide is Probable chemoreceptor glutamine deamidase CheD (Cereibacter sphaeroides (strain ATCC 17023 / DSM 158 / JCM 6121 / CCUG 31486 / LMG 2827 / NBRC 12203 / NCIMB 8253 / ATH 2.4.1.) (Rhodobacter sphaeroides)).